A 623-amino-acid polypeptide reads, in one-letter code: Translation initiation factor IF-2 (623 aa).

Positions 1 to 18 are enriched in low complexity; sequence MTLNKKTNNENSSKTTPK. Disordered regions lie at residues 1–21 and 92–115; these read MTLN…KLSK and PQKE…KLQA. The 169-residue stretch at 125–293 folds into the tr-type G domain; the sequence is KTPPIVTIMG…ILLFSEIQNL (169 aa). Residues 134-141 are G1; the sequence is GHVDHGKT. A GTP-binding site is contributed by 134–141; it reads GHVDHGKT. The tract at residues 159–163 is G2; it reads GITQH. The interval 180–183 is G3; that stretch reads DTPG. Residues 180-184 and 234-237 contribute to the GTP site; these read DTPGH and NKVD. The interval 234-237 is G4; that stretch reads NKVD. Positions 270–272 are G5; sequence SAL.

It belongs to the TRAFAC class translation factor GTPase superfamily. Classic translation factor GTPase family. IF-2 subfamily.

It is found in the cytoplasm. Its function is as follows. One of the essential components for the initiation of protein synthesis. Protects formylmethionyl-tRNA from spontaneous hydrolysis and promotes its binding to the 30S ribosomal subunits. Also involved in the hydrolysis of GTP during the formation of the 70S ribosomal complex. In Aster yellows witches'-broom phytoplasma (strain AYWB), this protein is Translation initiation factor IF-2.